We begin with the raw amino-acid sequence, 387 residues long: MKVSELNLKAKSLLEFHLDDIELSGEISKITIHGSGHWYFDLKDEKSSIACVMFKGFNQFVQTQPKVGDMLDLRGYVSLYEASGRYQFIAKSMQKTSLGDLEAKFLALKEKLEKEGLFDINAKKSIVKFPKKIGIITSFTSAALQDMLKLISQKEYNLCKITIFNALTQGQSAPNSLINALKKANEYDLDAIILARGGGSREDLFCFNDEELARCIFSLKTPVVSAIGHEIDYVISDFVADLRAPTPSAAIDMIFPNKLSLEQGLDELTMRFKSQMLNHLKFYQNKIDHLQNLAKAKSLENAFFLRKQKLDFLQSQLKSVLNLKLLNYENKLNNFEELLAQHKNFFDKSKNLINLQKDGKNISLEKLKKGDIIKLCSINESKEAQIL.

This sequence belongs to the XseA family. As to quaternary structure, heterooligomer composed of large and small subunits.

It localises to the cytoplasm. It catalyses the reaction Exonucleolytic cleavage in either 5'- to 3'- or 3'- to 5'-direction to yield nucleoside 5'-phosphates.. In terms of biological role, bidirectionally degrades single-stranded DNA into large acid-insoluble oligonucleotides, which are then degraded further into small acid-soluble oligonucleotides. This is Exodeoxyribonuclease 7 large subunit from Campylobacter lari (strain RM2100 / D67 / ATCC BAA-1060).